A 357-amino-acid chain; its full sequence is Putative F-box protein At5g50220 (357 aa).

The F-box domain occupies 27–73 (IAEDIGIPIDLMVEILKKLPAKSLIKFQCVSKQWSSIIGSSRDFIDS).

This Arabidopsis thaliana (Mouse-ear cress) protein is Putative F-box protein At5g50220.